The following is a 212-amino-acid chain: Protein-L-isoaspartate O-methyltransferase (212 aa).

Residue Ser-61 is part of the active site.

This sequence belongs to the methyltransferase superfamily. L-isoaspartyl/D-aspartyl protein methyltransferase family.

It is found in the cytoplasm. The enzyme catalyses [protein]-L-isoaspartate + S-adenosyl-L-methionine = [protein]-L-isoaspartate alpha-methyl ester + S-adenosyl-L-homocysteine. Catalyzes the methyl esterification of L-isoaspartyl residues in peptides and proteins that result from spontaneous decomposition of normal L-aspartyl and L-asparaginyl residues. It plays a role in the repair and/or degradation of damaged proteins. The polypeptide is Protein-L-isoaspartate O-methyltransferase (Pseudoalteromonas atlantica (strain T6c / ATCC BAA-1087)).